Here is a 112-residue protein sequence, read N- to C-terminus: uncharacterized protein (112 aa).

The tract at residues 70 to 112 (GLYRGRRPPGRDAARPTTAILFAQGRPPLLDQRAPTRRGSHQR) is disordered.

This is an uncharacterized protein from Homo sapiens (Human).